The following is a 233-amino-acid chain: Protein Thf1 (233 aa).

Residues 183-205 (DKLSKDLELYRSNLDKMTQALAV) are a coiled coil. Residues 213 to 233 (DRKKREQRQQQASTPVAPPNE) form a disordered region.

The protein belongs to the THF1 family.

In terms of biological role, may be involved in photosynthetic membrane biogenesis. In Trichormus variabilis (strain ATCC 29413 / PCC 7937) (Anabaena variabilis), this protein is Protein Thf1.